Reading from the N-terminus, the 342-residue chain is Phosphatidate cytidylyltransferase, mitochondrial (342 aa).

Belongs to the TAM41 family. The cofactor is Mg(2+). It depends on Co(2+) as a cofactor. Requires Cu(2+) as cofactor.

The protein localises to the mitochondrion inner membrane. It carries out the reaction a 1,2-diacyl-sn-glycero-3-phosphate + CTP + H(+) = a CDP-1,2-diacyl-sn-glycerol + diphosphate. It participates in phospholipid metabolism; CDP-diacylglycerol biosynthesis; CDP-diacylglycerol from sn-glycerol 3-phosphate: step 3/3. Functionally, catalyzes the formation of CDP-diacylglycerol (CDP-DAG) from phosphatidic acid (PA) in the mitochondrial inner membrane. Required for the biosynthesis of the dimeric phospholipid cardiolipin, which stabilizes supercomplexes of the mitochondrial respiratory chain in the mitochondrial inner membrane. The chain is Phosphatidate cytidylyltransferase, mitochondrial from Drosophila melanogaster (Fruit fly).